The following is a 578-amino-acid chain: Keratin, type II cytoskeletal 1b (578 aa).

A head region spans residues 1-163; sequence MSHQFSSQSA…DPEIQRIKTQ (163 aa). Arginine 95 carries the omega-N-methylarginine modification. The segment at 164 to 200 is coil 1A; it reads EREQIMVLNNKFASFIDKVRFLEQQNQVLQTKWELLQ. The 314-residue stretch at 164 to 477 folds into the IF rod domain; it reads EREQIMVLNN…QLLEGEESRM (314 aa). Positions 201–219 are linker 1; that stretch reads QVNTSTGTNNLEPLLENYI. The coil 1B stretch occupies residues 220 to 311; it reads GDLRRQVDLL…LFLTELSQVQ (92 aa). Residues 312 to 335 are linker 12; the sequence is THISDTNVILSMDNNRSLDLDSII. The coil 2 stretch occupies residues 336-474; sequence DAVRTQYELI…TYRQLLEGEE (139 aa). Positions 475 to 578 are tail; sequence SRMSGELQSH…TNTSHRRILE (104 aa). Arginine 523 is subject to Omega-N-methylarginine. The span at 547 to 556 shows a compositional bias: gly residues; sequence GSYGGSGRSG. The interval 547 to 578 is disordered; the sequence is GSYGGSGRSGRGSSRVQIIQTSTNTSHRRILE. Positions 562–571 are enriched in polar residues; that stretch reads VQIIQTSTNT.

The protein belongs to the intermediate filament family. Post-translationally, undergoes deimination of some arginine residues (citrullination). In terms of tissue distribution, expressed exclusively in skin.

The polypeptide is Keratin, type II cytoskeletal 1b (KRT77) (Homo sapiens (Human)).